The following is a 134-amino-acid chain: MTNIRKTHPLLKIINSSFVDLPAPSSLSSWWNFGSLLGVCLAVQILTGLFLAMHYTSDTATAFNSVTHICRDVNYGWLLRYLHANGASMFFICLYLHVGRGLYYGSYTYSETWNIGILLLFAVMATAFMGYVLP.

3 helical membrane-spanning segments follow: residues 33–53, 77–98, and 113–133; these read FGSL…FLAM, WLLR…YLHV, and WNIG…GYVL. Heme b is bound by residues His-83 and His-97.

It belongs to the cytochrome b family. In terms of assembly, the cytochrome bc1 complex contains 11 subunits: 3 respiratory subunits (MT-CYB, CYC1 and UQCRFS1), 2 core proteins (UQCRC1 and UQCRC2) and 6 low-molecular weight proteins (UQCRH/QCR6, UQCRB/QCR7, UQCRQ/QCR8, UQCR10/QCR9, UQCR11/QCR10 and a cleavage product of UQCRFS1). This cytochrome bc1 complex then forms a dimer. It depends on heme b as a cofactor.

It localises to the mitochondrion inner membrane. Functionally, component of the ubiquinol-cytochrome c reductase complex (complex III or cytochrome b-c1 complex) that is part of the mitochondrial respiratory chain. The b-c1 complex mediates electron transfer from ubiquinol to cytochrome c. Contributes to the generation of a proton gradient across the mitochondrial membrane that is then used for ATP synthesis. The sequence is that of Cytochrome b (MT-CYB) from Chiroderma salvini (Salvin's big-eyed bat).